A 90-amino-acid polypeptide reads, in one-letter code: DNA-binding protein HU-beta (90 aa).

The protein belongs to the bacterial histone-like protein family. Heterodimer of an alpha and a beta chain.

Functionally, histone-like DNA-binding protein which is capable of wrapping DNA to stabilize it, and thus to prevent its denaturation under extreme environmental conditions. This is DNA-binding protein HU-beta (hupB) from Serratia marcescens.